The sequence spans 255 residues: Imidazole glycerol phosphate synthase subunit HisF (255 aa).

Catalysis depends on residues aspartate 11 and aspartate 130.

The protein belongs to the HisA/HisF family. In terms of assembly, heterodimer of HisH and HisF.

It localises to the cytoplasm. The catalysed reaction is 5-[(5-phospho-1-deoxy-D-ribulos-1-ylimino)methylamino]-1-(5-phospho-beta-D-ribosyl)imidazole-4-carboxamide + L-glutamine = D-erythro-1-(imidazol-4-yl)glycerol 3-phosphate + 5-amino-1-(5-phospho-beta-D-ribosyl)imidazole-4-carboxamide + L-glutamate + H(+). It functions in the pathway amino-acid biosynthesis; L-histidine biosynthesis; L-histidine from 5-phospho-alpha-D-ribose 1-diphosphate: step 5/9. Functionally, IGPS catalyzes the conversion of PRFAR and glutamine to IGP, AICAR and glutamate. The HisF subunit catalyzes the cyclization activity that produces IGP and AICAR from PRFAR using the ammonia provided by the HisH subunit. The chain is Imidazole glycerol phosphate synthase subunit HisF from Akkermansia muciniphila (strain ATCC BAA-835 / DSM 22959 / JCM 33894 / BCRC 81048 / CCUG 64013 / CIP 107961 / Muc).